Consider the following 193-residue polypeptide: MLRYNLGMGLILASASPRRSELLRKARMVFRVEPAHVPEVHTAGEDPKQYAQRLARDKARAVAAKYPNDFVIGADTIVVADAHVLEKPADEADAARMIRMLSGHTHEVTTGVCLCGPNVEIVETETTRVTVAEISDEEIADYIHTGEPMDKAGAYGIQGMFSRWVTGIEGDYFNVVGLPIARVYRMMRRAGVL.

Asp-75 serves as the catalytic Proton acceptor.

The protein belongs to the Maf family. YhdE subfamily. The cofactor is a divalent metal cation.

It is found in the cytoplasm. It catalyses the reaction dTTP + H2O = dTMP + diphosphate + H(+). The enzyme catalyses UTP + H2O = UMP + diphosphate + H(+). Functionally, nucleoside triphosphate pyrophosphatase that hydrolyzes dTTP and UTP. May have a dual role in cell division arrest and in preventing the incorporation of modified nucleotides into cellular nucleic acids. The protein is dTTP/UTP pyrophosphatase of Koribacter versatilis (strain Ellin345).